A 531-amino-acid chain; its full sequence is Light-independent protochlorophyllide reductase subunit B (531 aa).

D36 is a binding site for [4Fe-4S] cluster. Residue D296 is the Proton donor of the active site. Position 431–432 (431–432) interacts with substrate; that stretch reads GM.

It belongs to the ChlB/BchB/BchZ family. In terms of assembly, protochlorophyllide reductase is composed of three subunits; ChlL, ChlN and ChlB. Forms a heterotetramer of two ChlB and two ChlN subunits. The cofactor is [4Fe-4S] cluster.

The protein resides in the plastid. It is found in the chloroplast. The enzyme catalyses chlorophyllide a + oxidized 2[4Fe-4S]-[ferredoxin] + 2 ADP + 2 phosphate = protochlorophyllide a + reduced 2[4Fe-4S]-[ferredoxin] + 2 ATP + 2 H2O. The protein operates within porphyrin-containing compound metabolism; chlorophyll biosynthesis (light-independent). Functionally, component of the dark-operative protochlorophyllide reductase (DPOR) that uses Mg-ATP and reduced ferredoxin to reduce ring D of protochlorophyllide (Pchlide) to form chlorophyllide a (Chlide). This reaction is light-independent. The NB-protein (ChlN-ChlB) is the catalytic component of the complex. In Nephroselmis olivacea (Green alga), this protein is Light-independent protochlorophyllide reductase subunit B.